Reading from the N-terminus, the 241-residue chain is Biosynthetic peptidoglycan transglycosylase (241 aa).

Residues 18-38 form a helical membrane-spanning segment; that stretch reads GVIGIIALWMAGILIFAFLPV.

Belongs to the glycosyltransferase 51 family.

It is found in the cell inner membrane. It carries out the reaction [GlcNAc-(1-&gt;4)-Mur2Ac(oyl-L-Ala-gamma-D-Glu-L-Lys-D-Ala-D-Ala)](n)-di-trans,octa-cis-undecaprenyl diphosphate + beta-D-GlcNAc-(1-&gt;4)-Mur2Ac(oyl-L-Ala-gamma-D-Glu-L-Lys-D-Ala-D-Ala)-di-trans,octa-cis-undecaprenyl diphosphate = [GlcNAc-(1-&gt;4)-Mur2Ac(oyl-L-Ala-gamma-D-Glu-L-Lys-D-Ala-D-Ala)](n+1)-di-trans,octa-cis-undecaprenyl diphosphate + di-trans,octa-cis-undecaprenyl diphosphate + H(+). It functions in the pathway cell wall biogenesis; peptidoglycan biosynthesis. In terms of biological role, peptidoglycan polymerase that catalyzes glycan chain elongation from lipid-linked precursors. The polypeptide is Biosynthetic peptidoglycan transglycosylase (Yersinia pseudotuberculosis serotype O:1b (strain IP 31758)).